A 283-amino-acid chain; its full sequence is Pyridoxal kinase PdxY (283 aa).

Substrate is bound at residue S8. ATP contacts are provided by D110 and E147. D219 contacts substrate.

The protein belongs to the pyridoxine kinase family. PdxY subfamily. As to quaternary structure, homodimer. It depends on Mg(2+) as a cofactor.

The enzyme catalyses pyridoxal + ATP = pyridoxal 5'-phosphate + ADP + H(+). The protein operates within cofactor metabolism; pyridoxal 5'-phosphate salvage; pyridoxal 5'-phosphate from pyridoxal: step 1/1. In terms of biological role, pyridoxal kinase involved in the salvage pathway of pyridoxal 5'-phosphate (PLP). Catalyzes the phosphorylation of pyridoxal to PLP. The sequence is that of Pyridoxal kinase PdxY from Leifsonia xyli subsp. xyli (strain CTCB07).